A 111-amino-acid polypeptide reads, in one-letter code: Photosystem II reaction center Psb28 protein (111 aa).

It belongs to the Psb28 family. In terms of assembly, part of the photosystem II complex.

It is found in the cellular thylakoid membrane. The protein is Photosystem II reaction center Psb28 protein of Nostoc sp. (strain PCC 7120 / SAG 25.82 / UTEX 2576).